A 399-amino-acid polypeptide reads, in one-letter code: Dual-specificity RNA methyltransferase RlmN (399 aa).

E122 (proton acceptor) is an active-site residue. The Radical SAM core domain occupies 128 to 371 (ETDRGTLCVS…VRTPRGRDIL (244 aa)). A disulfide bridge links C135 with C374. Residues C142, C146, and C149 each contribute to the [4Fe-4S] cluster site. S-adenosyl-L-methionine contacts are provided by residues 200-201 (GE), S232, 254-256 (SLH), and N331. The active-site S-methylcysteine intermediate is C374.

This sequence belongs to the radical SAM superfamily. RlmN family. Requires [4Fe-4S] cluster as cofactor.

Its subcellular location is the cytoplasm. The enzyme catalyses adenosine(2503) in 23S rRNA + 2 reduced [2Fe-2S]-[ferredoxin] + 2 S-adenosyl-L-methionine = 2-methyladenosine(2503) in 23S rRNA + 5'-deoxyadenosine + L-methionine + 2 oxidized [2Fe-2S]-[ferredoxin] + S-adenosyl-L-homocysteine. It catalyses the reaction adenosine(37) in tRNA + 2 reduced [2Fe-2S]-[ferredoxin] + 2 S-adenosyl-L-methionine = 2-methyladenosine(37) in tRNA + 5'-deoxyadenosine + L-methionine + 2 oxidized [2Fe-2S]-[ferredoxin] + S-adenosyl-L-homocysteine. In terms of biological role, specifically methylates position 2 of adenine 2503 in 23S rRNA and position 2 of adenine 37 in tRNAs. m2A2503 modification seems to play a crucial role in the proofreading step occurring at the peptidyl transferase center and thus would serve to optimize ribosomal fidelity. The sequence is that of Dual-specificity RNA methyltransferase RlmN from Rhodopseudomonas palustris (strain BisB18).